A 365-amino-acid chain; its full sequence is Patr class I histocompatibility antigen, A-126 alpha chain (365 aa).

An N-terminal signal peptide occupies residues M1–A24. The segment at G25–D114 is alpha-1. Topologically, residues G25–I308 are extracellular. The N-linked (GlcNAc...) asparagine glycan is linked to N110. The tract at residues G115–T206 is alpha-2. Cystine bridges form between C125/C188 and C227/C283. The tract at residues D207–W298 is alpha-3. The 87-residue stretch at P209–T295 folds into the Ig-like C1-type domain. The tract at residues E299–I308 is connecting peptide. The helical transmembrane segment at V309–W332 threads the bilayer. The Cytoplasmic segment spans residues R333 to V365. The disordered stretch occupies residues D338–V365. Residues G342–S359 show a composition bias toward low complexity. Phosphoserine is present on S343. Residue Y344 is modified to Phosphotyrosine. 5 positions are modified to phosphoserine: S345, S349, S352, S356, and S359.

This sequence belongs to the MHC class I family. Heterodimer of an alpha chain and a beta chain (beta-2-microglobulin).

The protein localises to the membrane. Its function is as follows. Involved in the presentation of foreign antigens to the immune system. This chain is Patr class I histocompatibility antigen, A-126 alpha chain (Patr-A), found in Pan troglodytes (Chimpanzee).